The following is a 350-amino-acid chain: MGSFRCMSPASPSWSGLLELLLCGESLSAAQATDLMQAWLSESLTPVQTGAFLAGLRAKGMEAEELAAMAAVLREACPLPCARPDRFLVDTCGTGGDGADTFNISTAVAFTAAACGVEVAKHGNRSASGKVGSADVLEGLGLNLKAPLQLVVDAIPAAGVTFLFAPAWHPALVNLAPLRRSLGVRTVFNLLGPLVNPLKPQAQVLGVAKKDLLDPMAGALQRLGLERAVVVHGAGGLDEASLAGPNDLRFIEAGAIRSLQLSPDELGLATADLETLKGGDLDCNQTILQQVLQGRGEPAQRDVVALNTALVLWAAGIDTDLSSAAARAAEALDQGLPWTRLETLRQHLAS.

5-phospho-alpha-D-ribose 1-diphosphate-binding positions include Gly-93, 96-97 (GD), Thr-101, 103-106 (NIST), 121-129 (KHGNRSASG), and Ser-133. Anthranilate is bound at residue Gly-93. Ser-105 serves as a coordination point for Mg(2+). Anthranilate is bound at residue Asn-124. Arg-179 is an anthranilate binding site. Mg(2+)-binding residues include Asp-238 and Glu-239.

This sequence belongs to the anthranilate phosphoribosyltransferase family. Homodimer. It depends on Mg(2+) as a cofactor.

It carries out the reaction N-(5-phospho-beta-D-ribosyl)anthranilate + diphosphate = 5-phospho-alpha-D-ribose 1-diphosphate + anthranilate. It functions in the pathway amino-acid biosynthesis; L-tryptophan biosynthesis; L-tryptophan from chorismate: step 2/5. In terms of biological role, catalyzes the transfer of the phosphoribosyl group of 5-phosphorylribose-1-pyrophosphate (PRPP) to anthranilate to yield N-(5'-phosphoribosyl)-anthranilate (PRA). The sequence is that of Anthranilate phosphoribosyltransferase from Parasynechococcus marenigrum (strain WH8102).